A 157-amino-acid chain; its full sequence is uncharacterized protein (157 aa).

The 146-residue stretch at 9-154 (LLINYKTLDE…ETNLNAVTNE (146 aa)) folds into the N-acetyltransferase domain.

This is an uncharacterized protein from Bacillus cereus (strain ATCC 14579 / DSM 31 / CCUG 7414 / JCM 2152 / NBRC 15305 / NCIMB 9373 / NCTC 2599 / NRRL B-3711).